Reading from the N-terminus, the 963-residue chain is VPS35 endosomal protein-sorting factor-like (963 aa).

The tract at residues 43–69 (SKTKKVNRKGSTSSTSSSSSSSVVDPL) is disordered. Residues 53 to 69 (STSSTSSSSSSSVVDPL) show a composition bias toward low complexity. Ser265 is subject to Phosphoserine. A helical transmembrane segment spans residues 703–719 (ACVAYCFITIPSLAGIF).

This sequence belongs to the VPS35L family. In terms of assembly, component of the heterotrimeric retriever complex formed by VPS26C, VPS29 and VPS35L. Interacts with VPS29. Interacts with COMMD1, CCDC93 and CCDC22; associates with the CCC (COMMD/CCDC22/CCDC93) complex which contains at least COMMD1 (and possibly other COMM domain-containing proteins), CCDC22 and CCDC93. Interacts with WASHC1, WASHC2A and WASHC2C. Interacts with SNX17 and SNX31.

It is found in the membrane. Its subcellular location is the endosome. Its function is as follows. Acts as a component of the retriever complex. The retriever complex is a heterotrimeric complex related to retromer cargo-selective complex (CSC) and essential for retromer-independent retrieval and recycling of numerous cargos such as integrin alpha-5/beta-1 (ITGA5:ITGB1). The recruitment of the retriever complex to the endosomal membrane involves CCC and WASH complexes. In the endosomes, drives the retrieval and recycling of NxxY-motif-containing cargo proteins by coupling to SNX17, a cargo essential for the homeostatic maintenance of numerous cell surface proteins associated with processes that include cell migration, cell adhesion, nutrient supply and cell signaling. Involved in copper-dependent ATP7A trafficking between the trans-Golgi network and vesicles in the cell periphery; the function is proposed to depend on its association with the CCC complex and cooperation with the WASH complex on early endosomes. Seems not to be required for CCC complex stability. In terms of biological role, (Microbial infection) The heterotrimeric retriever complex, in collaboration with the CCC complex, mediates the exit of human papillomavirus to the cell surface. The protein is VPS35 endosomal protein-sorting factor-like of Homo sapiens (Human).